The chain runs to 145 residues: Histone H2B.7 (145 aa).

A compositionally biased stretch (basic and acidic residues) spans methionine 1–proline 30. Positions methionine 1–lysine 53 are disordered. At alanine 2 the chain carries N,N,N-trimethylalanine; alternate. A N,N-dimethylalanine; alternate modification is found at alanine 2. Alanine 2 is subject to N-methylalanine; alternate. Residue lysine 4 is modified to N6-methyllysine; partial. Lysine 7 and lysine 12 each carry N6-acetyllysine. N6,N6-dimethyllysine is present on lysine 13. N6-acetyllysine occurs at positions 23, 28, and 34. Lysine 35 carries the post-translational modification N6-acetyllysine; partial. Lysine 141 participates in a covalent cross-link: Glycyl lysine isopeptide (Lys-Gly) (interchain with G-Cter in ubiquitin).

Belongs to the histone H2B family. In terms of assembly, the nucleosome is a histone octamer containing two molecules each of H2A, H2B, H3 and H4 assembled in one H3-H4 heterotetramer and two H2A-H2B heterodimers. The octamer wraps approximately 147 bp of DNA. Post-translationally, can be acetylated to form H2BK6ac, H2BK11ac, H2BK22ac, H2BK27ac H2BK33ac and H2BK34ac. In terms of processing, mono-, di- or trimethylated at the N-terminus to form H2BA1me1/2/3. H2BA1me2 and H2BA1me3 may be methylated and/or acetylated to form H2BA1me2K3me1, H2BA1me2K3me1K6ac, H2BA1me2K6ac H2BA1me3K6ac, H2BA1me3K6acK11ac and H2BA1me2K3me1K6acK11ac. Monoubiquitinated by BRE1 to form H2BK143ub1 and deubiquitinated by UBP26. Required for heterochromatic histone H3 di- and trimethylation at H3K4me. May give a specific tag for epigenetic transcriptional activation.

It is found in the nucleus. Its subcellular location is the chromosome. Functionally, core component of nucleosome. Nucleosomes wrap and compact DNA into chromatin, limiting DNA accessibility to the cellular machineries which require DNA as a template. Histones thereby play a central role in transcription regulation, DNA repair, DNA replication and chromosomal stability. DNA accessibility is regulated via a complex set of post-translational modifications of histones, also called histone code, and nucleosome remodeling. This Arabidopsis thaliana (Mouse-ear cress) protein is Histone H2B.7.